The sequence spans 115 residues: Large ribosomal subunit protein bL19 (115 aa).

Belongs to the bacterial ribosomal protein bL19 family.

This protein is located at the 30S-50S ribosomal subunit interface and may play a role in the structure and function of the aminoacyl-tRNA binding site. This chain is Large ribosomal subunit protein bL19, found in Bacillus pumilus (strain SAFR-032).